The primary structure comprises 1393 residues: Protein strawberry notch homolog 1 (1393 aa).

The segment at 129 to 148 (STRPSVSAPTVRNAMTSAPS) is disordered. A Phosphoserine modification is found at S148. N6-acetyllysine is present on K149. S162 and S214 each carry phosphoserine. K413 bears the N6-acetyllysine mark. Positions 687–840 (APSNNSSPRD…ANSNTNSNSS (154 aa)) are disordered. S692, S693, and S697 each carry phosphoserine. The span at 697-716 (SPCKENKIKKRKGEEITREA) shows a compositional bias: basic and acidic residues. The segment covering 733–747 (SGSESDASDNEESDY) has biased composition (acidic residues). S754, S755, and S768 each carry phosphoserine. Acidic residues predominate over residues 756–775 (GDDDDFNPFLDESNEDDEND). Over residues 781 to 793 (KDHKKNKEKKKKK) the composition is skewed to basic residues. Phosphoserine occurs at positions 794 and 815. Residues 824 to 840 (PAPNSTPANSNTNSNSS) are compositionally biased toward low complexity. The stretch at 843–870 (TSQDAVERAQQMKKDLLDKLEKLAEDLP) forms a coiled coil. N6-acetyllysine is present on K1222. S1386 carries the post-translational modification Phosphoserine.

Belongs to the SBNO family.

It localises to the nucleus. Plays a crucial role in the regulation of neural stem cells (NSCs) proliferation. Enhances the phosphorylation of GSK3B through the PI3K-Akt signaling pathway, thereby upregulating the Wnt/beta-catenin signaling pathway and promoting the proliferation of NSCs. Improves ischemic stroke recovery while inhibiting neuroinflammation through small extracellular vesicles (sEVs)-mediated mechanism. Enhances the secretion of sEVs from NSCs, which in turn inhibit both the MAPK and NF-kappaB pathways in microglia. This inhibition suppresses the pro-inflammatory M1 polarization of microglia, promoting a shift towards the M2 anti-inflammatory phenotype, which is beneficial for reducing neuroinflammation. In Homo sapiens (Human), this protein is Protein strawberry notch homolog 1 (SBNO1).